Consider the following 173-residue polypeptide: Large ribosomal subunit protein uL10 (173 aa).

The protein belongs to the universal ribosomal protein uL10 family. In terms of assembly, part of the ribosomal stalk of the 50S ribosomal subunit. The N-terminus interacts with L11 and the large rRNA to form the base of the stalk. The C-terminus forms an elongated spine to which L12 dimers bind in a sequential fashion forming a multimeric L10(L12)X complex.

Its function is as follows. Forms part of the ribosomal stalk, playing a central role in the interaction of the ribosome with GTP-bound translation factors. This is Large ribosomal subunit protein uL10 from Chloroherpeton thalassium (strain ATCC 35110 / GB-78).